Reading from the N-terminus, the 111-residue chain is Putative G antigen family E member 3 (111 aa).

The segment at 1–67 (MSEHVRTRSQ…EGAPAVQGPD (67 aa)) is disordered. The segment covering 8-24 (RSQSSERGNDQESSQPV) has biased composition (polar residues). Position 97 is a phosphothreonine (Thr-97).

The protein belongs to the GAGE family.

The protein is Putative G antigen family E member 3 (PAGE2B) of Homo sapiens (Human).